Here is an 821-residue protein sequence, read N- to C-terminus: PX domain-containing protein C1450.12 (821 aa).

Residues 171 to 310 (AYVLGVRQST…SFLTDDPVTL (140 aa)) enclose the PX domain. Positions 235-271 (KDDHDTYLNSSEDSTLSPLPSRSSDTNDPQSDSQHVL) are disordered. Polar residues predominate over residues 241–268 (YLNSSEDSTLSPLPSRSSDTNDPQSDSQ). A phosphothreonine mark is found at Thr260 and Thr597. 2 stretches are compositionally biased toward acidic residues: residues 737-746 (GDEDDQDEND) and 754-766 (EHMEDDDSVEEFD). Residues 737–766 (GDEDDQDENDQVTKVEEEHMEDDDSVEEFD) form a disordered region. Ser761 is subject to Phosphoserine.

Its subcellular location is the mitochondrion membrane. This is PX domain-containing protein C1450.12 from Schizosaccharomyces pombe (strain 972 / ATCC 24843) (Fission yeast).